Here is a 947-residue protein sequence, read N- to C-terminus: Bifunctional glutamine synthetase adenylyltransferase/adenylyl-removing enzyme (947 aa).

The tract at residues Met-1–Glu-440 is adenylyl removase. The interval Ser-450–Val-947 is adenylyl transferase.

Belongs to the GlnE family. It depends on Mg(2+) as a cofactor.

It carries out the reaction [glutamine synthetase]-O(4)-(5'-adenylyl)-L-tyrosine + phosphate = [glutamine synthetase]-L-tyrosine + ADP. It catalyses the reaction [glutamine synthetase]-L-tyrosine + ATP = [glutamine synthetase]-O(4)-(5'-adenylyl)-L-tyrosine + diphosphate. Functionally, involved in the regulation of glutamine synthetase GlnA, a key enzyme in the process to assimilate ammonia. When cellular nitrogen levels are high, the C-terminal adenylyl transferase (AT) inactivates GlnA by covalent transfer of an adenylyl group from ATP to specific tyrosine residue of GlnA, thus reducing its activity. Conversely, when nitrogen levels are low, the N-terminal adenylyl removase (AR) activates GlnA by removing the adenylyl group by phosphorolysis, increasing its activity. The regulatory region of GlnE binds the signal transduction protein PII (GlnB) which indicates the nitrogen status of the cell. This Salmonella paratyphi C (strain RKS4594) protein is Bifunctional glutamine synthetase adenylyltransferase/adenylyl-removing enzyme.